Here is a 227-residue protein sequence, read N- to C-terminus: Holliday junction branch migration complex subunit RuvA (227 aa).

Residues 1-64 (MFESISGILT…EDALRLFGFS (64 aa)) form a domain I region. The tract at residues 65-143 (NVQERTLFLS…LTDAASCAQS (79 aa)) is domain II. Residues 144-158 (QTDDRAAHPSNLGCA) are flexible linker. Residues 159–227 (PHAREIEDLV…HPHAVAPAAE (69 aa)) form a domain III region.

Belongs to the RuvA family. Homotetramer. Forms an RuvA(8)-RuvB(12)-Holliday junction (HJ) complex. HJ DNA is sandwiched between 2 RuvA tetramers; dsDNA enters through RuvA and exits via RuvB. An RuvB hexamer assembles on each DNA strand where it exits the tetramer. Each RuvB hexamer is contacted by two RuvA subunits (via domain III) on 2 adjacent RuvB subunits; this complex drives branch migration. In the full resolvosome a probable DNA-RuvA(4)-RuvB(12)-RuvC(2) complex forms which resolves the HJ.

It localises to the cytoplasm. The RuvA-RuvB-RuvC complex processes Holliday junction (HJ) DNA during genetic recombination and DNA repair, while the RuvA-RuvB complex plays an important role in the rescue of blocked DNA replication forks via replication fork reversal (RFR). RuvA specifically binds to HJ cruciform DNA, conferring on it an open structure. The RuvB hexamer acts as an ATP-dependent pump, pulling dsDNA into and through the RuvAB complex. HJ branch migration allows RuvC to scan DNA until it finds its consensus sequence, where it cleaves and resolves the cruciform DNA. This Treponema pallidum (strain Nichols) protein is Holliday junction branch migration complex subunit RuvA.